The chain runs to 606 residues: Protein couch potato (606 aa).

The Nuclear localization signal motif lies at 81-105 (IKRRPTLPQTPASAPQVLSPSPKRQ). Repeat copies occupy residues 91–95 (PASAP), 109–113 (AVSVL), 114–118 (PVTVP), 122–126 (PVSVP), 128–132 (PVSVP), 134–138 (PVSVK), and 159–163 (PISHP). Positions 91–164 (PASAPQVLSP…SHSHPISHPH (74 aa)) are 7 X 5 AA approximate repeats of P-V-S-V-P. 4 disordered regions span residues 147 to 166 (QIAHTHQISHSHPISHPHHH), 282 to 311 (QQQQHILLSSGSSSSKHNSNNNSNTSAGAA), 324 to 365 (VPTT…TSAA), and 388 to 410 (PATSAVSDSNNNLNSSSSSNSNS). Residues 344–365 (SNSATASAPTTPSPAGSVTSAA) are compositionally biased toward low complexity. The 83-residue stretch at 442–524 (RTLFVSGLPM…QTIRLEFAKS (83 aa)) folds into the RRM domain.

As to expression, expressed in neural precursors and their daughter cells in the embryonic peripheral nervous system. Less abundant in a number of glial cells in the peripheral and central nervous systems and also present at low levels in the developing gut.

The protein resides in the nucleus. Functionally, may play a role in the development or function of the peripheral nervous system by regulating the processing of nervous system-specific transcripts. This Drosophila melanogaster (Fruit fly) protein is Protein couch potato (cpo).